Consider the following 293-residue polypeptide: MTSSYVGRFAPTPSGYLHFGSLVAAVASYLDARAVGGRWLVRMEDLDPPREVPGAQQAILETLERYGFEWDGAVERQSERFPAYAAVVEQLLRSGLAYACTCSRKQLEGFAGIYPGFCRDAGHAREDAAIRLRVPELEYRFVDRVQGEVRQHLGREVGDFVIQRRDGFYAYQLAVVLDDAWQGITDIVRGADLLDSTPRQLYLQELLGLSQPRYLHVPLIVQPDGHKLGKSYRSPPLPAEQAAAPLTRALRALGQRPPAELAQASASEALAWGVAHWDATRIPRCATLPEERL.

L-glutamate contacts are provided by residues R8–T12 and E44. Residues P11–S21 carry the 'HIGH' region motif. C100, C102, Y114, and C118 together coordinate Zn(2+). L-glutamate contacts are provided by Y171 and R189. Residues K227–S231 carry the 'KMSKS' region motif. K230 is an ATP binding site.

This sequence belongs to the class-I aminoacyl-tRNA synthetase family. GluQ subfamily. Zn(2+) is required as a cofactor.

In terms of biological role, catalyzes the tRNA-independent activation of glutamate in presence of ATP and the subsequent transfer of glutamate onto a tRNA(Asp). Glutamate is transferred on the 2-amino-5-(4,5-dihydroxy-2-cyclopenten-1-yl) moiety of the queuosine in the wobble position of the QUC anticodon. The polypeptide is Glutamyl-Q tRNA(Asp) synthetase (Pseudomonas aeruginosa (strain LESB58)).